Consider the following 229-residue polypeptide: Small ribosomal subunit protein uS2c (229 aa).

This sequence belongs to the universal ribosomal protein uS2 family.

It localises to the plastid. The protein resides in the chloroplast. In Trieres chinensis (Marine centric diatom), this protein is Small ribosomal subunit protein uS2c (rps2).